Here is a 726-residue protein sequence, read N- to C-terminus: Putative tyrosine-protein kinase AmsA (726 aa).

2 consecutive transmembrane segments (helical) span residues 32–52 (WMIV…SLFA) and 425–445 (ILIV…LVLM).

Belongs to the etk/wzc family.

It localises to the cell inner membrane. It carries out the reaction L-tyrosyl-[protein] + ATP = O-phospho-L-tyrosyl-[protein] + ADP + H(+). It functions in the pathway glycan metabolism; exopolysaccharide biosynthesis. Its function is as follows. Involved in the biosynthesis of amylovoran which functions as a virulence factor. This is Putative tyrosine-protein kinase AmsA (amsA) from Erwinia amylovora (Fire blight bacteria).